The primary structure comprises 792 residues: Vicilin Car i 2.0101 (792 aa).

The signal sequence occupies residues 1 to 26; sequence MVTKAKIPLFLFLSALFLALVCSSLA. Disordered stretches follow at residues 132-153, 182-217, 240-272, 302-325, and 350-394; these read ERRE…DPRE, RFEE…YRQC, ERLE…EQRY, EERE…CQRR, and QQGR…ESGE. Basic and acidic residues-rich tracts occupy residues 182–200 and 207–217; these read RFEE…RGRD and PRDPREQYRQC. Positions 302 to 314 are enriched in basic and acidic residues; the sequence is EERERQRGRDRQD. Low complexity predominate over residues 315–325; that stretch reads PQQQYHRCQRR. Residues 350–375 are compositionally biased toward basic and acidic residues; sequence QQGREWGPDQASPRRESRGREEEQQR. Tyrosine 379 contacts Cu cation. 2 Cupin type-1 domains span residues 384 to 537 and 582 to 754; these read QGLR…DRLE and ISLK…EEIE. Residues cysteine 652, histidine 654, and histidine 698 each coordinate Cu cation. Residues 727–754 are a coiled coil; that stretch reads LAGQNNIINQLEREAKELSFNMPREEIE.

The protein belongs to the 7S seed storage protein family. As to quaternary structure, homotrimer. As to expression, expressed in seed (at protein level). Expressed in seed.

In terms of biological role, seed storage protein. The protein is Vicilin Car i 2.0101 of Carya illinoinensis (Pecan).